The sequence spans 248 residues: PF03932 family protein CutC (248 aa).

This sequence belongs to the CutC family. Homodimer.

It localises to the cytoplasm. This Salmonella paratyphi A (strain AKU_12601) protein is PF03932 family protein CutC.